Consider the following 123-residue polypeptide: Small ribosomal subunit protein uS13 (123 aa).

Residues 93-123 (HRKGLPVRGQNTKNNARTRKGPAKAIAGKKK) form a disordered region. The segment covering 108 to 123 (ARTRKGPAKAIAGKKK) has biased composition (basic residues).

It belongs to the universal ribosomal protein uS13 family. As to quaternary structure, part of the 30S ribosomal subunit. Forms a loose heterodimer with protein S19. Forms two bridges to the 50S subunit in the 70S ribosome.

Functionally, located at the top of the head of the 30S subunit, it contacts several helices of the 16S rRNA. In the 70S ribosome it contacts the 23S rRNA (bridge B1a) and protein L5 of the 50S subunit (bridge B1b), connecting the 2 subunits; these bridges are implicated in subunit movement. Contacts the tRNAs in the A and P-sites. In Leuconostoc mesenteroides subsp. mesenteroides (strain ATCC 8293 / DSM 20343 / BCRC 11652 / CCM 1803 / JCM 6124 / NCDO 523 / NBRC 100496 / NCIMB 8023 / NCTC 12954 / NRRL B-1118 / 37Y), this protein is Small ribosomal subunit protein uS13.